A 588-amino-acid polypeptide reads, in one-letter code: Actin-histidine N-methyltransferase (588 aa).

Residues 1–25 are disordered; it reads MGKKSRVKTQKSGTGATASVSPKET. The span at 10-25 shows a compositional bias: polar residues; the sequence is QKSGTGATASVSPKET. S-adenosyl-L-methionine contacts are provided by residues arginine 75, 104–106, arginine 254, 275–279, and 325–327; these read EGF, DMCNH, and SGF. Residues 94–314 form the SET domain; sequence EGFEMVNFKE…AGEQIYIFYG (221 aa). A disordered region spans residues 546–588; it reads VNGENSIPNGTRSGKENFNQEGSERATEGTKESSSDSTAGARE. The span at 548-566 shows a compositional bias: polar residues; the sequence is GENSIPNGTRSGKENFNQE. Residues 567–579 are compositionally biased toward basic and acidic residues; it reads GSERATEGTKESS.

Belongs to the class V-like SAM-binding methyltransferase superfamily. SETD3 actin-histidine methyltransferase family. As to quaternary structure, interacts with MYOD1. Phosphorylated by GSK3B, which is required for recognition by the SCF(FBXW7) complex and subsequent degradation. Post-translationally, ubiquitinated by the SCF(FBXW7) complex following phosphorylation by GSK3B, leading to its degradation by the proteasome.

It localises to the cytoplasm. It is found in the nucleus. The enzyme catalyses L-histidyl-[protein] + S-adenosyl-L-methionine = N(tele)-methyl-L-histidyl-[protein] + S-adenosyl-L-homocysteine + H(+). Functionally, protein-histidine N-methyltransferase that specifically mediates 3-methylhistidine (tele-methylhistidine) methylation of actin at 'His-73'. Histidine methylation of actin is required for smooth muscle contraction of the laboring uterus during delivery. Does not have protein-lysine N-methyltransferase activity and probably only catalyzes histidine methylation of actin. In Canis lupus familiaris (Dog), this protein is Actin-histidine N-methyltransferase.